Reading from the N-terminus, the 297-residue chain is Large ribosomal subunit protein uL3 (297 aa).

Disordered stretches follow at residues 124–143 (NQKI…PVRQ) and 258–297 (MKEK…DKGE).

Belongs to the universal ribosomal protein uL3 family. In terms of assembly, part of the 50S ribosomal subunit. Forms a cluster with proteins L14 and L19.

In terms of biological role, one of the primary rRNA binding proteins, it binds directly near the 3'-end of the 23S rRNA, where it nucleates assembly of the 50S subunit. The polypeptide is Large ribosomal subunit protein uL3 (Mycoplasma mobile (strain ATCC 43663 / 163K / NCTC 11711) (Mesomycoplasma mobile)).